The primary structure comprises 460 residues: V-type ATP synthase beta chain 2 (460 aa).

Belongs to the ATPase alpha/beta chains family.

Produces ATP from ADP in the presence of a proton gradient across the membrane. The V-type beta chain is a regulatory subunit. The chain is V-type ATP synthase beta chain 2 from Clostridium tetani (strain Massachusetts / E88).